Here is an 878-residue protein sequence, read N- to C-terminus: DNA mismatch repair protein MutS (878 aa).

Residue 630–637 (GPNMAGKS) participates in ATP binding.

This sequence belongs to the DNA mismatch repair MutS family.

This protein is involved in the repair of mismatches in DNA. It is possible that it carries out the mismatch recognition step. This protein has a weak ATPase activity. The protein is DNA mismatch repair protein MutS of Chlorobaculum tepidum (strain ATCC 49652 / DSM 12025 / NBRC 103806 / TLS) (Chlorobium tepidum).